Reading from the N-terminus, the 304-residue chain is Homoserine O-acetyltransferase (304 aa).

The Acyl-thioester intermediate role is filled by Cys-142. Substrate contacts are provided by Lys-163 and Ser-191. Residue His-234 is the Proton acceptor of the active site. Glu-236 is an active-site residue. Arg-248 contributes to the substrate binding site.

It belongs to the MetA family.

The protein resides in the cytoplasm. It catalyses the reaction L-homoserine + acetyl-CoA = O-acetyl-L-homoserine + CoA. Its pathway is amino-acid biosynthesis; L-methionine biosynthesis via de novo pathway; O-acetyl-L-homoserine from L-homoserine: step 1/1. Functionally, transfers an acetyl group from acetyl-CoA to L-homoserine, forming acetyl-L-homoserine. This is Homoserine O-acetyltransferase from Thermotoga petrophila (strain ATCC BAA-488 / DSM 13995 / JCM 10881 / RKU-1).